The sequence spans 130 residues: Small ribosomal subunit protein uS9 (130 aa).

Positions 110-130 are disordered; it reads AKERKKYGRKGARARFQFSKR. Positions 111–130 are enriched in basic residues; that stretch reads KERKKYGRKGARARFQFSKR.

It belongs to the universal ribosomal protein uS9 family.

The chain is Small ribosomal subunit protein uS9 from Syntrophotalea carbinolica (strain DSM 2380 / NBRC 103641 / GraBd1) (Pelobacter carbinolicus).